Consider the following 324-residue polypeptide: MIVVLVDPRRPALVPVDAVEFLTGDVQYTEEMPVKVPWSLPSARPAYDGEDAPVLLSSDPEHPVVKARLAAGDRLIAAPEPQPGERLVDAVALMDKLRTSGPWESEQTHDSLRRYLLEETYELFDAVRSGNADELREELGDVLLQVLFHARIAEDAPHHPFSIDDVADALVRKLGNRVPAVLAGESISLDEQLAQWEERKAQEKKVKARASSMDDVPTGQPALALAQKVLARVSQAGLPAELIPASLTSVSVSADTDSENELRTAVLEFMDTVREVEAAVAAGRRGEDVPEELDVAPLGVISEDEWRAYWPGAESSASEAEPEE.

This sequence belongs to the nucleoside triphosphate pyrophosphohydrolase family. In terms of assembly, homotetramer. Mg(2+) serves as cofactor.

It carries out the reaction ATP + H2O = AMP + diphosphate + H(+). Functionally, required to maintain the full capacity of the mycobacteria to respond to oxidative stress via the degradation of the oxidation-induced damaged nucleotides. It hydrolyzes all canonical (d)NTPs, as well as the mutagenic dUTP and 8-oxo-7,8-dihydro-2'-deoxyguanosine 5'-triphosphate (8-oxo-dGTP). Also involved in the transcriptional activation of RelA in response to oxidative stress. This chain is Nucleoside triphosphate pyrophosphohydrolase (mazG), found in Mycolicibacterium smegmatis (strain ATCC 700084 / mc(2)155) (Mycobacterium smegmatis).